A 773-amino-acid chain; its full sequence is Endonuclease MutS2 (773 aa).

Gly-334 to Thr-341 serves as a coordination point for ATP. The Smr domain occupies Val-698–Lys-773.

This sequence belongs to the DNA mismatch repair MutS family. MutS2 subfamily. As to quaternary structure, homodimer. Binds to stalled ribosomes, contacting rRNA.

In terms of biological role, endonuclease that is involved in the suppression of homologous recombination and thus may have a key role in the control of bacterial genetic diversity. Its function is as follows. Acts as a ribosome collision sensor, splitting the ribosome into its 2 subunits. Detects stalled/collided 70S ribosomes which it binds and splits by an ATP-hydrolysis driven conformational change. Acts upstream of the ribosome quality control system (RQC), a ribosome-associated complex that mediates the extraction of incompletely synthesized nascent chains from stalled ribosomes and their subsequent degradation. Probably generates substrates for RQC. This chain is Endonuclease MutS2, found in Solidesulfovibrio magneticus (strain ATCC 700980 / DSM 13731 / RS-1) (Desulfovibrio magneticus).